Reading from the N-terminus, the 148-residue chain is Large ribosomal subunit protein uL15 (148 aa).

The segment covering 1–30 has biased composition (basic residues); sequence MPSRLRKTRKLRGHVSHGHGRIGKHRKHPG. A disordered region spans residues 1–38; it reads MPSRLRKTRKLRGHVSHGHGRIGKHRKHPGGRGNAGGL. (3S)-3-hydroxyhistidine is present on His-39. An N6-acetyllysine mark is found at Lys-47 and Lys-55. Ser-68 is subject to Phosphoserine. Lys-110 bears the N6-acetyllysine mark.

Belongs to the universal ribosomal protein uL15 family. Post-translationally, hydroxylated on His-39 by MINA.

This Pan troglodytes (Chimpanzee) protein is Large ribosomal subunit protein uL15 (RPL27A).